Reading from the N-terminus, the 122-residue chain is Large ribosomal subunit protein uL14 (122 aa).

The protein belongs to the universal ribosomal protein uL14 family. Part of the 50S ribosomal subunit. Forms a cluster with proteins L3 and L19. In the 70S ribosome, L14 and L19 interact and together make contacts with the 16S rRNA in bridges B5 and B8.

Binds to 23S rRNA. Forms part of two intersubunit bridges in the 70S ribosome. In Petrotoga mobilis (strain DSM 10674 / SJ95), this protein is Large ribosomal subunit protein uL14.